The primary structure comprises 464 residues: Septin homolog spn5 (464 aa).

The disordered stretch occupies residues 28–91; it reads QVDESSAKRS…VPNSNGKSIP (64 aa). 2 stretches are compositionally biased toward basic and acidic residues: residues 41–54 and 69–81; these read ESRK…KEQI and TAKD…KQDE. In terms of domain architecture, Septin-type G spans 115-370; the sequence is NGIDINLIVV…DTFRTEKLVA (256 aa). Residues 125–132 form a G1 motif region; the sequence is GESSLGKT. GTP-binding positions include 125 to 132, Thr151, Gly177, 257 to 265, Gly304, and Arg319; these read GESSLGKT and KADTMTSDE. Positions 174-177 are G3 motif; sequence DTPG. The tract at residues 256–259 is G4 motif; it reads GKAD. Residues 396-453 are a coiled coil; it reads LVEEALTKVMKEKYREKENNLELLETNLKTHHKDYKHALKKRITALEEEKNRLIKEIG.

This sequence belongs to the TRAFAC class TrmE-Era-EngA-EngB-Septin-like GTPase superfamily. Septin GTPase family. As to quaternary structure, component of the sporulation-specific septin complex composed of at least spn2, spn5, spn6 and spn7.

The protein localises to the nucleus. It localises to the forespore membrane. Septin-like protein involved in the correct orientation of forespore membrane extension during sporulation. The chain is Septin homolog spn5 (spn5) from Schizosaccharomyces pombe (strain 972 / ATCC 24843) (Fission yeast).